The primary structure comprises 413 residues: MIEELGLKVKTASKEAAKLSTAEKNTFLQKLADSLVENTDRIISENAKDLAKAKGHGISEIMVDRLRLTAQRISDMATGLRQVAELPDPIGQVLQGFTNLDGLKIVQKRVPLGTVGMIFESRPNVTIDAFSLCFKTGNSVLLRGGSDAIYSNMVLVEIIKENLLSAKITDGVVELLSDTSHAEAEKMMQADKFLDVLIPRGSARLINRVKEKATVPVIETGVGNCTIFVDESADLDMATRIVINAKTQRPSVCNAAESLVVHAKIADEFLPKLQNEINKVHEVEFRADERSLKALSAGIPATDEDFGMEFLYYILSVKTVDNLDEAIEHINTYSSRHSESIVTHDYFNAQKFQDEIDAAAVYVNASTRFTDGFVFGLGAEIGISTQKLHARGPMGLEALTSTKYLIDGCGQIR.

The protein belongs to the gamma-glutamyl phosphate reductase family.

Its subcellular location is the cytoplasm. The catalysed reaction is L-glutamate 5-semialdehyde + phosphate + NADP(+) = L-glutamyl 5-phosphate + NADPH + H(+). Its pathway is amino-acid biosynthesis; L-proline biosynthesis; L-glutamate 5-semialdehyde from L-glutamate: step 2/2. Its function is as follows. Catalyzes the NADPH-dependent reduction of L-glutamate 5-phosphate into L-glutamate 5-semialdehyde and phosphate. The product spontaneously undergoes cyclization to form 1-pyrroline-5-carboxylate. The sequence is that of Gamma-glutamyl phosphate reductase from Lactococcus lactis subsp. cremoris (strain SK11).